The chain runs to 385 residues: Putative transporter YthQ (385 aa).

8 consecutive transmembrane segments (helical) span residues 24–44 (AVID…FVIY), 67–87 (WLYA…FLME), 106–128 (YALL…IVLP), 133–155 (SVLI…HIFF), 176–193 (TLVR…IVFT), 197–214 (LLAL…IRSL), 304–324 (AFTV…LLVY), and 365–385 (ILHY…LLFT).

The protein localises to the cell membrane. The sequence is that of Putative transporter YthQ (ythQ) from Bacillus subtilis (strain 168).